The sequence spans 105 residues: Nucleoid-associated protein lin2851 (105 aa).

Low complexity predominate over residues 1–16 (MRGMGNMQGMMKQMQK). Positions 1 to 23 (MRGMGNMQGMMKQMQKMQKEMAK) are disordered.

This sequence belongs to the YbaB/EbfC family. As to quaternary structure, homodimer.

It is found in the cytoplasm. Its subcellular location is the nucleoid. Its function is as follows. Binds to DNA and alters its conformation. May be involved in regulation of gene expression, nucleoid organization and DNA protection. In Listeria innocua serovar 6a (strain ATCC BAA-680 / CLIP 11262), this protein is Nucleoid-associated protein lin2851.